Here is a 556-residue protein sequence, read N- to C-terminus: DNA ligase B (556 aa).

The N6-AMP-lysine intermediate role is filled by Lys126.

It belongs to the NAD-dependent DNA ligase family. LigB subfamily.

It carries out the reaction NAD(+) + (deoxyribonucleotide)n-3'-hydroxyl + 5'-phospho-(deoxyribonucleotide)m = (deoxyribonucleotide)n+m + AMP + beta-nicotinamide D-nucleotide.. In terms of biological role, catalyzes the formation of phosphodiester linkages between 5'-phosphoryl and 3'-hydroxyl groups in double-stranded DNA using NAD as a coenzyme and as the energy source for the reaction. This is DNA ligase B from Stutzerimonas stutzeri (strain A1501) (Pseudomonas stutzeri).